The primary structure comprises 258 residues: UPF0246 protein YaaA (258 aa).

Belongs to the UPF0246 family.

In Escherichia coli (strain SE11), this protein is UPF0246 protein YaaA.